Consider the following 426-residue polypeptide: 3-phosphoshikimate 1-carboxyvinyltransferase (426 aa).

3 residues coordinate 3-phosphoshikimate: Lys22, Ser23, and Arg27. Lys22 is a phosphoenolpyruvate binding site. 2 residues coordinate phosphoenolpyruvate: Gly96 and Arg124. Ser170, Ser171, Gln172, Ser198, Asp314, Asn337, and Lys341 together coordinate 3-phosphoshikimate. Phosphoenolpyruvate is bound at residue Gln172. Asp314 acts as the Proton acceptor in catalysis. Phosphoenolpyruvate is bound by residues Arg345, Arg387, and Lys412.

It belongs to the EPSP synthase family. As to quaternary structure, monomer.

The protein resides in the cytoplasm. It carries out the reaction 3-phosphoshikimate + phosphoenolpyruvate = 5-O-(1-carboxyvinyl)-3-phosphoshikimate + phosphate. It participates in metabolic intermediate biosynthesis; chorismate biosynthesis; chorismate from D-erythrose 4-phosphate and phosphoenolpyruvate: step 6/7. Its function is as follows. Catalyzes the transfer of the enolpyruvyl moiety of phosphoenolpyruvate (PEP) to the 5-hydroxyl of shikimate-3-phosphate (S3P) to produce enolpyruvyl shikimate-3-phosphate and inorganic phosphate. The polypeptide is 3-phosphoshikimate 1-carboxyvinyltransferase (Shewanella loihica (strain ATCC BAA-1088 / PV-4)).